A 318-amino-acid chain; its full sequence is Olfactory receptor 10H1 (318 aa).

Topologically, residues methionine 1–leucine 25 are extracellular. The N-linked (GlcNAc...) asparagine glycan is linked to asparagine 5. Residues methionine 26–methionine 46 form a helical membrane-spanning segment. The Cytoplasmic segment spans residues alanine 47 to serine 54. The chain crosses the membrane as a helical span at residues leucine 55 to valine 75. Over alanine 76–serine 99 the chain is Extracellular. A disulfide bridge connects residues cysteine 97 and cysteine 189. The helical transmembrane segment at glutamine 100 to tyrosine 120 threads the bilayer. Over aspartate 121–arginine 139 the chain is Cytoplasmic. A helical membrane pass occupies residues glycine 140–threonine 160. The Extracellular segment spans residues serine 161–alanine 197. Residues lysine 198 to serine 218 form a helical membrane-spanning segment. The Cytoplasmic portion of the chain corresponds to tyrosine 219–alanine 238. Residues phenylalanine 239–isoleucine 259 traverse the membrane as a helical segment. Over tyrosine 260–aspartate 272 the chain is Extracellular. The chain crosses the membrane as a helical span at residues threonine 273 to leucine 293. Residues arginine 294–methionine 318 lie on the Cytoplasmic side of the membrane.

The protein belongs to the G-protein coupled receptor 1 family.

The protein localises to the cell membrane. Its function is as follows. Odorant receptor. The chain is Olfactory receptor 10H1 (OR10H1) from Homo sapiens (Human).